We begin with the raw amino-acid sequence, 214 residues long: MPGEATETVPAAEQELHQPQAETGSGTESDSDDSPPELEQDSTQTTTQQAQLAAAAEIDEEPVSKAKQSRSEKKARKAMSKLGLRQVTGVTRVTIRKSKNILFVITKPDVYKSPASDTYIVFGEAKIEDLSQQAQLAAAEKFKVQGEAVSNIQENTQTPTVQEESEEEEVDETGVEVKDIELVMSQANVSRAKAVRALKNNSNDIVNAIMELTM.

The disordered stretch occupies residues 1–80 (MPGEATETVP…SEKKARKAMS (80 aa)). Acidic residues predominate over residues 29 to 40 (SDSDDSPPELEQ). Residues 41 to 56 (DSTQTTTQQAQLAAAA) show a composition bias toward low complexity. The 66-residue stretch at 69 to 134 (SRSEKKARKA…AKIEDLSQQA (66 aa)) folds into the NAC-A/B domain. One can recognise a UBA domain in the interval 175–212 (VEVKDIELVMSQANVSRAKAVRALKNNSNDIVNAIMEL).

This sequence belongs to the NAC-alpha family.

May promote appropriate targeting of ribosome-nascent polypeptide complexes. The polypeptide is Nascent polypeptide-associated complex subunit alpha (naca) (Xenopus tropicalis (Western clawed frog)).